A 214-amino-acid chain; its full sequence is MTTLADLRTNYSRASLDAADVNPNPFVQFDVWFKEALSAQLPEPNTMTLATVDEAGRPSARIVLIKGVDERGFVFFTNYESRKGRELAHNPNAALLFYWIELERQVRIEGRIEKTTEEESDRYFASRPLGSRIGAWASEQSAVIESRALLEAREKEISARFGENPPRPPHWGGYRLVPSTIEFWQGRPSRLHDRLLYTRDAASASGWRIARLAP.

Substrate contacts are provided by residues 8-11 (RTNY) and K66. Residues 61 to 66 (RIVLIK), 76 to 77 (FT), R82, K83, and Q105 contribute to the FMN site. Residues Y123, R127, and S131 each contribute to the substrate site. FMN is bound by residues 140-141 (QS) and W184. Substrate is bound at residue 190-192 (RLH). An FMN-binding site is contributed by R194.

It belongs to the pyridoxamine 5'-phosphate oxidase family. In terms of assembly, homodimer. FMN serves as cofactor.

The enzyme catalyses pyridoxamine 5'-phosphate + O2 + H2O = pyridoxal 5'-phosphate + H2O2 + NH4(+). It catalyses the reaction pyridoxine 5'-phosphate + O2 = pyridoxal 5'-phosphate + H2O2. The protein operates within cofactor metabolism; pyridoxal 5'-phosphate salvage; pyridoxal 5'-phosphate from pyridoxamine 5'-phosphate: step 1/1. Its pathway is cofactor metabolism; pyridoxal 5'-phosphate salvage; pyridoxal 5'-phosphate from pyridoxine 5'-phosphate: step 1/1. Catalyzes the oxidation of either pyridoxine 5'-phosphate (PNP) or pyridoxamine 5'-phosphate (PMP) into pyridoxal 5'-phosphate (PLP). This Burkholderia thailandensis (strain ATCC 700388 / DSM 13276 / CCUG 48851 / CIP 106301 / E264) protein is Pyridoxine/pyridoxamine 5'-phosphate oxidase.